Consider the following 104-residue polypeptide: ATP-dependent Clp protease adapter protein ClpS (104 aa).

It belongs to the ClpS family. In terms of assembly, binds to the N-terminal domain of the chaperone ClpA.

Involved in the modulation of the specificity of the ClpAP-mediated ATP-dependent protein degradation. The chain is ATP-dependent Clp protease adapter protein ClpS from Burkholderia thailandensis (strain ATCC 700388 / DSM 13276 / CCUG 48851 / CIP 106301 / E264).